A 72-amino-acid chain; its full sequence is MAKEDVIEIEGKVVDTMPNAMFTVELENGHQVLATVSGKIRKNYIRILVGDRVTVELSPYDLTRGRITYRFK.

The S1-like domain maps to 1-72 (MAKEDVIEIE…TRGRITYRFK (72 aa)).

Belongs to the IF-1 family. As to quaternary structure, component of the 30S ribosomal translation pre-initiation complex which assembles on the 30S ribosome in the order IF-2 and IF-3, IF-1 and N-formylmethionyl-tRNA(fMet); mRNA recruitment can occur at any time during PIC assembly.

It is found in the cytoplasm. In terms of biological role, one of the essential components for the initiation of protein synthesis. Stabilizes the binding of IF-2 and IF-3 on the 30S subunit to which N-formylmethionyl-tRNA(fMet) subsequently binds. Helps modulate mRNA selection, yielding the 30S pre-initiation complex (PIC). Upon addition of the 50S ribosomal subunit IF-1, IF-2 and IF-3 are released leaving the mature 70S translation initiation complex. The chain is Translation initiation factor IF-1 from Streptococcus suis (strain 05ZYH33).